The primary structure comprises 373 residues: Alginate lyase (373 aa).

The N-terminal stretch at 1-25 (MRLPMQKLLIPTLLGLAMFAGSVNA) is a signal peptide. Residues 66–67 (SK), 139–140 (HT), and tyrosine 257 contribute to the substrate site.

Belongs to the polysaccharide lyase 5 family.

It is found in the periplasm. The catalysed reaction is Eliminative cleavage of alginate to give oligosaccharides with 4-deoxy-alpha-L-erythro-hex-4-enuronosyl groups at their non-reducing ends and beta-D-mannuronate at their reducing end.. Catalyzes the depolymerization of alginate by cleaving the beta-1,4 glycosidic bond between two adjacent sugar residues via a beta-elimination mechanism. May serve to degrade mislocalized alginate that is trapped in the periplasmic space. This is Alginate lyase from Pseudomonas fluorescens.